Consider the following 559-residue polypeptide: CCR4-NOT transcription complex subunit 6-like (559 aa).

A required for interaction with cnot1, cnot3 and cnot7 region spans residues 1–148 (MPKEKYDPPD…LYQEPDGTRK (148 aa)). Residues 1 to 550 (MPKEKYDPPD…NGLHLPVHST (550 aa)) are nuclease domain. LRR repeat units lie at residues 52-73 (HLTA…IAKL), 75-96 (HLVY…LGNM), 98-120 (TLRE…GRLF), and 121-143 (QLQT…YQEP). Glu-235 is a Mg(2+) binding site. Residues Glu-235, Glu-271, His-353, and Pro-358 each contribute to the substrate site. Position 405 (Asp-405) interacts with Mg(2+). Residue Asp-405 is the Proton donor/acceptor of the active site. 3 residues coordinate substrate: Asn-407, Asn-474, and Phe-479.

It belongs to the CCR4/nocturin family. Component of the CCR4-NOT complex. Requires Mg(2+) as cofactor.

It is found in the cytoplasm. The protein resides in the nucleus. It catalyses the reaction Exonucleolytic cleavage of poly(A) to 5'-AMP.. Its function is as follows. Poly(A) nuclease with 3'-5' RNase activity. Catalytic component of the CCR4-NOT complex which is one of the major cellular mRNA deadenylases and is linked to various cellular processes including bulk mRNA degradation, miRNA-mediated repression, translational repression during translational initiation and general transcription regulation. Additional complex functions may be a consequence of its influence on mRNA expression. The polypeptide is CCR4-NOT transcription complex subunit 6-like (cnot6l) (Danio rerio (Zebrafish)).